Consider the following 344-residue polypeptide: MITQRQKDILNLIVELFTKTHEPIGSKTLQNSIASSSATIRNDMAALEKLGLLEKAHTSSGRLPSQEGFRYFVEHSLNPDSLDEQDVYQVIKAFDFEAFRLGDLLQRASDVLANLTGYTALILDVEPKKQRLTTFDIVKLSNHDALAVLTLDEASPVTVQFAIPKNFLDSDLMTVAKIARERFLNQTVLDIHYRLRTELPQIIQKYFPRTDNVLDLFDHIFNPIFQEEVFISGKIKTLEFAGLNTYQFLENLQSVALEIRQSLPEDELHRVQVADSKEKSLADLTVISQKFLIPYRGFGILTVIGPVDLDYQRTISLINVISRVLAVKLGDFYRYLNSNHYEVH.

This sequence belongs to the HrcA family.

Its function is as follows. Negative regulator of class I heat shock genes (grpE-dnaK-dnaJ and groELS operons). Prevents heat-shock induction of these operons. The chain is Heat-inducible transcription repressor HrcA from Streptococcus mutans serotype c (strain ATCC 700610 / UA159).